A 103-amino-acid chain; its full sequence is Putative sulfurtransferase YtwF (103 aa).

The Rhodanese domain maps to 17 to 100; the sequence is ADEELYLIDV…GMMAWEGETK (84 aa). Catalysis depends on Cys65, which acts as the Cysteine persulfide intermediate.

This chain is Putative sulfurtransferase YtwF (ytwF), found in Bacillus subtilis (strain 168).